A 50-amino-acid chain; its full sequence is Large ribosomal subunit protein eL39 (50 aa).

The segment covering 1–12 has biased composition (basic residues); it reads MGKKSKAKKKRL. A disordered region spans residues 1–21; it reads MGKKSKAKKKRLGKLEKQNSR.

It belongs to the eukaryotic ribosomal protein eL39 family.

The sequence is that of Large ribosomal subunit protein eL39 from Haloquadratum walsbyi (strain DSM 16790 / HBSQ001).